We begin with the raw amino-acid sequence, 325 residues long: RNA ligase 1 (325 aa).

Requires Mg(2+) as cofactor. The cofactor is Mn(2+). Post-translationally, AMPylates itself (auto-AMPylation).

The enzyme catalyses ATP + (ribonucleotide)n-3'-hydroxyl + 5'-phospho-(ribonucleotide)m = (ribonucleotide)n+m + AMP + diphosphate.. Functions as an RNA ligase, in vitro. The ligation reaction entails three nucleotidyl transfer steps. In the first step, the RNA ligase reacts with ATP in the absence of nucleic acid to form a covalent ligase-AMP intermediate and release pyrophosphate. In step 2, the ligase-AMP binds to the nucleic acid and transfers the adenylate to the 5'-PO4 terminus to form an adenylylated intermediate. In step 3, the RNA ligase directs the attack of the 3'-OH on the 5'-phosphoanhydride linkage, resulting in a repaired 3'-5' phosphodiester and release of AMP. Exhibits selectivity for single-stranded RNA substrates and may not have nick-sealing activity on double-stranded DNA-RNA hybrids. May play a role in maintaining RNA integrity under stress conditions, for example in response to reactive oxygen species (ROS). In Rattus norvegicus (Rat), this protein is RNA ligase 1.